The primary structure comprises 152 residues: Regulatory protein RecX (152 aa).

It belongs to the RecX family.

Its subcellular location is the cytoplasm. Functionally, modulates RecA activity. In Chromohalobacter salexigens (strain ATCC BAA-138 / DSM 3043 / CIP 106854 / NCIMB 13768 / 1H11), this protein is Regulatory protein RecX.